The chain runs to 760 residues: Catalase-peroxidase (760 aa).

A disordered region spans residues 1 to 22 (MSQGECPVKKVPNVAGSGTRNT). A cross-link (tryptophyl-tyrosyl-methioninium (Trp-Tyr) (with M-268)) is located at residues 93–242 (WHSAGTYRVT…LAAAHMGLIY (150 aa)). His-94 acts as the Proton acceptor in catalysis. A disordered region spans residues 206 to 226 (KGEGIMDGDQHKTDKSEPHTS). Residues 213–226 (GDQHKTDKSEPHTS) are compositionally biased toward basic and acidic residues. A cross-link (tryptophyl-tyrosyl-methioninium (Tyr-Met) (with W-93)) is located at residues 242-268 (YVNPEGPEGIPDPVAAAHDIRTTFGRM). Residue His-283 coordinates heme b.

It belongs to the peroxidase family. Peroxidase/catalase subfamily. As to quaternary structure, homodimer or homotetramer. It depends on heme b as a cofactor. Post-translationally, formation of the three residue Trp-Tyr-Met cross-link is important for the catalase, but not the peroxidase activity of the enzyme.

It localises to the cytoplasm. The catalysed reaction is H2O2 + AH2 = A + 2 H2O. It catalyses the reaction 2 H2O2 = O2 + 2 H2O. Its function is as follows. Bifunctional enzyme with both catalase and broad-spectrum peroxidase activity. The sequence is that of Catalase-peroxidase from Pyrenophora tritici-repentis (strain Pt-1C-BFP) (Wheat tan spot fungus).